The following is a 575-amino-acid chain: Thiol:disulfide interchange protein DsbD (575 aa).

Positions 1 to 24 are cleaved as a signal peptide; the sequence is MIKRTLMLFLLLCSPLLTPAAANA. 2 disulfides stabilise this stretch: Cys-126–Cys-132 and Cys-192–Cys-314. 8 helical membrane passes run 180–200, 216–236, 253–273, 297–317, 336–356, 367–387, 394–414, and 425–445; these read AILIGIGIAFTPCVLPMYPLI, IFWLALSYVQGMAVTYTLLGL, YVLIGLSVLFILLALSMFGLY, LFGVFAMGALAGLICSPCTTA, GLTLYLYALGMGLPLIAVTLF, WMQYVKEAFGFIILALPVFLL, AWGIRLWSLLAVSFLGWGFVL, and VIQLILLILMLIATRPLQDWF. In terms of domain architecture, Thioredoxin spans 444–575; sequence WFWGTTVTQQ…FNEHLQHLPK (132 aa). Cys-490 and Cys-493 form a disulfide bridge.

Belongs to the thioredoxin family. DsbD subfamily.

It is found in the cell inner membrane. The catalysed reaction is [protein]-dithiol + NAD(+) = [protein]-disulfide + NADH + H(+). It carries out the reaction [protein]-dithiol + NADP(+) = [protein]-disulfide + NADPH + H(+). In terms of biological role, required to facilitate the formation of correct disulfide bonds in some periplasmic proteins and for the assembly of the periplasmic c-type cytochromes. Acts by transferring electrons from cytoplasmic thioredoxin to the periplasm. This transfer involves a cascade of disulfide bond formation and reduction steps. This chain is Thiol:disulfide interchange protein DsbD, found in Photorhabdus laumondii subsp. laumondii (strain DSM 15139 / CIP 105565 / TT01) (Photorhabdus luminescens subsp. laumondii).